The sequence spans 657 residues: Threonine--tRNA ligase (657 aa).

A TGS domain is found at 7-70 (SQTQVTVTLP…SEDASIEIVT (64 aa)). The catalytic stretch occupies residues 253–555 (DHRKLGAELE…LIEHTGGNFP (303 aa)). Positions 351, 402, and 532 each coordinate Zn(2+).

Belongs to the class-II aminoacyl-tRNA synthetase family. Homodimer. Zn(2+) is required as a cofactor.

The protein localises to the cytoplasm. The catalysed reaction is tRNA(Thr) + L-threonine + ATP = L-threonyl-tRNA(Thr) + AMP + diphosphate + H(+). In terms of biological role, catalyzes the attachment of threonine to tRNA(Thr) in a two-step reaction: L-threonine is first activated by ATP to form Thr-AMP and then transferred to the acceptor end of tRNA(Thr). Also edits incorrectly charged L-seryl-tRNA(Thr). The chain is Threonine--tRNA ligase from Prosthecochloris aestuarii (strain DSM 271 / SK 413).